The sequence spans 488 residues: Protein nucleotidyltransferase YdiU (488 aa).

Residues G91, G93, R94, K114, D126, G127, R177, and R184 each coordinate ATP. Residue D253 is the Proton acceptor of the active site. N254 and D263 together coordinate Mg(2+). D263 contributes to the ATP binding site.

Belongs to the SELO family. The cofactor is Mg(2+). It depends on Mn(2+) as a cofactor.

The enzyme catalyses L-seryl-[protein] + ATP = 3-O-(5'-adenylyl)-L-seryl-[protein] + diphosphate. It carries out the reaction L-threonyl-[protein] + ATP = 3-O-(5'-adenylyl)-L-threonyl-[protein] + diphosphate. The catalysed reaction is L-tyrosyl-[protein] + ATP = O-(5'-adenylyl)-L-tyrosyl-[protein] + diphosphate. It catalyses the reaction L-histidyl-[protein] + UTP = N(tele)-(5'-uridylyl)-L-histidyl-[protein] + diphosphate. The enzyme catalyses L-seryl-[protein] + UTP = O-(5'-uridylyl)-L-seryl-[protein] + diphosphate. It carries out the reaction L-tyrosyl-[protein] + UTP = O-(5'-uridylyl)-L-tyrosyl-[protein] + diphosphate. In terms of biological role, nucleotidyltransferase involved in the post-translational modification of proteins. It can catalyze the addition of adenosine monophosphate (AMP) or uridine monophosphate (UMP) to a protein, resulting in modifications known as AMPylation and UMPylation. This chain is Protein nucleotidyltransferase YdiU, found in Bacillus cereus (strain ATCC 14579 / DSM 31 / CCUG 7414 / JCM 2152 / NBRC 15305 / NCIMB 9373 / NCTC 2599 / NRRL B-3711).